Reading from the N-terminus, the 92-residue chain is Defensin-like protein 249 (92 aa).

An N-terminal signal peptide occupies residues 1–24 (MKLAAIFLASSVLLSLLPIHLSQG). Cystine bridges form between Cys34–Cys91, Cys45–Cys74, Cys53–Cys84, and Cys72–Cys86.

Belongs to the DEFL family.

Its subcellular location is the secreted. The protein is Defensin-like protein 249 (SCRL7) of Arabidopsis thaliana (Mouse-ear cress).